The following is a 295-amino-acid chain: MDPMITGLGVVALMGAAATIAGAAEDLESDVGSQSNPNSQVQLAPQMGHLHRIINKAVSGEPVAYGTWCGIAGSVAFVLMNSMQLPVIMAIAIGAVIAAMVHTTYAVTSHMGRIVSQSQFNQPLFMDMLVQHLGPIAGHGFIVTFCTVGLSYLMTLPIPGFAHPFPLPLLAVLWGITIGAIGSSTGDVHYGAEREYQQYPFGGGIPVAIHGDITTKAELGARNSMDVVHFCAKYGGPLTGFAFGAIVFLSFWNTIVFGITGGIISGLIIVLLLIILNNRLEVFARNRYGPYKEEE.

Transmembrane regions (helical) follow at residues 4-24 (MITG…AGAA), 60-80 (GEPV…FVLM), 87-107 (VIMA…TYAV), 140-160 (GFIV…PIPG), 161-181 (FAHP…IGAI), 234-254 (YGGP…FWNT), and 255-275 (IVFG…LLII).

This sequence belongs to the MtrE family. In terms of assembly, the complex is composed of 8 subunits; MtrA, MtrB, MtrC, MtrD, MtrE, MtrF, MtrG and MtrH.

The protein resides in the cell membrane. The catalysed reaction is 5-methyl-5,6,7,8-tetrahydromethanopterin + coenzyme M + 2 Na(+)(in) = 5,6,7,8-tetrahydromethanopterin + methyl-coenzyme M + 2 Na(+)(out). Its pathway is one-carbon metabolism; methanogenesis from CO(2); methyl-coenzyme M from 5,10-methylene-5,6,7,8-tetrahydromethanopterin: step 2/2. Functionally, part of a complex that catalyzes the formation of methyl-coenzyme M and tetrahydromethanopterin from coenzyme M and methyl-tetrahydromethanopterin. This is an energy-conserving, sodium-ion translocating step. The sequence is that of Tetrahydromethanopterin S-methyltransferase subunit E from Methanothermobacter marburgensis (strain ATCC BAA-927 / DSM 2133 / JCM 14651 / NBRC 100331 / OCM 82 / Marburg) (Methanobacterium thermoautotrophicum).